Consider the following 284-residue polypeptide: MEMO1 family protein Saci_0089 (284 aa).

This sequence belongs to the MEMO1 family.

This is MEMO1 family protein Saci_0089 from Sulfolobus acidocaldarius (strain ATCC 33909 / DSM 639 / JCM 8929 / NBRC 15157 / NCIMB 11770).